Reading from the N-terminus, the 350-residue chain is DNA polymerase IV (350 aa).

A UmuC domain is found at 4 to 185 (IIHIDMDCFY…LPLGKLPGIG (182 aa)). Mg(2+) is bound by residues aspartate 8 and aspartate 103. Residue glutamate 104 is part of the active site.

The protein belongs to the DNA polymerase type-Y family. In terms of assembly, monomer. Mg(2+) is required as a cofactor.

The protein resides in the cytoplasm. It carries out the reaction DNA(n) + a 2'-deoxyribonucleoside 5'-triphosphate = DNA(n+1) + diphosphate. In terms of biological role, poorly processive, error-prone DNA polymerase involved in untargeted mutagenesis. Copies undamaged DNA at stalled replication forks, which arise in vivo from mismatched or misaligned primer ends. These misaligned primers can be extended by PolIV. Exhibits no 3'-5' exonuclease (proofreading) activity. May be involved in translesional synthesis, in conjunction with the beta clamp from PolIII. The protein is DNA polymerase IV of Aeromonas hydrophila subsp. hydrophila (strain ATCC 7966 / DSM 30187 / BCRC 13018 / CCUG 14551 / JCM 1027 / KCTC 2358 / NCIMB 9240 / NCTC 8049).